Here is an 81-residue protein sequence, read N- to C-terminus: ATP synthase subunit c (81 aa).

2 consecutive transmembrane segments (helical) span residues 6-26 (AAAS…GPGF) and 57-77 (LAFM…LLFA).

This sequence belongs to the ATPase C chain family. As to quaternary structure, F-type ATPases have 2 components, F(1) - the catalytic core - and F(0) - the membrane proton channel. F(1) has five subunits: alpha(3), beta(3), gamma(1), delta(1), epsilon(1). F(0) has four main subunits: a(1), b(1), b'(1) and c(10-14). The alpha and beta chains form an alternating ring which encloses part of the gamma chain. F(1) is attached to F(0) by a central stalk formed by the gamma and epsilon chains, while a peripheral stalk is formed by the delta, b and b' chains.

Its subcellular location is the cellular thylakoid membrane. F(1)F(0) ATP synthase produces ATP from ADP in the presence of a proton or sodium gradient. F-type ATPases consist of two structural domains, F(1) containing the extramembraneous catalytic core and F(0) containing the membrane proton channel, linked together by a central stalk and a peripheral stalk. During catalysis, ATP synthesis in the catalytic domain of F(1) is coupled via a rotary mechanism of the central stalk subunits to proton translocation. In terms of biological role, key component of the F(0) channel; it plays a direct role in translocation across the membrane. A homomeric c-ring of between 10-14 subunits forms the central stalk rotor element with the F(1) delta and epsilon subunits. This Rippkaea orientalis (strain PCC 8801 / RF-1) (Cyanothece sp. (strain PCC 8801)) protein is ATP synthase subunit c.